Consider the following 300-residue polypeptide: ETS homologous factor (300 aa).

Positions 29-115 (STCNVSSGFF…SNLQHLKWNG (87 aa)) constitute a PNT domain. A disordered region spans residues 179–204 (LPIAESPDTKKEQDHPTKPHTKKHNP). The segment covering 185 to 195 (PDTKKEQDHPT) has biased composition (basic and acidic residues). Positions 207–289 (THLWEFIRDI…DGRRLVYKFG (83 aa)) form a DNA-binding region, ETS.

Belongs to the ETS family.

Its subcellular location is the nucleus. Transcriptional activator that may play a role in regulating epithelial cell differentiation and proliferation. May act as a repressor for a specific subset of ETS/AP-1-responsive genes, and as a modulator of the nuclear response to mitogen-activated protein kinase signaling cascades. Binds to DNA sequences containing the consensus nucleotide core sequence GGAA. Involved in regulation of TNFRSF10B/DR5 expression through Ets-binding sequences on the TNFRSF10B/DR5 promoter. This is ETS homologous factor (EHF) from Bos taurus (Bovine).